Reading from the N-terminus, the 249-residue chain is Aquaporin SIP2-1 (249 aa).

The next 2 helical transmembrane spans lie at 12-32 (PWLV…GALV) and 53-73 (VSLS…SGGA). Residues 76–78 (NPL) carry the NPA 1 motif. The next 4 membrane-spanning stretches (helical) occupy residues 104 to 124 (AQVI…PNVG), 133 to 155 (AHHG…VTLK), 176 to 196 (IHLL…AFAW), and 210 to 230 (LVYW…VTFF). Positions 189-191 (NPA) match the NPA 2 motif.

It belongs to the MIP/aquaporin (TC 1.A.8) family. SIP (TC 1.A.8.10) subfamily.

Its subcellular location is the membrane. In terms of biological role, aquaporins facilitate the transport of water and small neutral solutes across cell membranes. This chain is Aquaporin SIP2-1 (SIP2-1), found in Zea mays (Maize).